We begin with the raw amino-acid sequence, 207 residues long: Small ribosomal subunit protein uS4 (207 aa).

Residues 31–51 (KCKLDSKPGQHGRTSGARTSD) form a disordered region. Positions 97 to 160 (SRLDNVVYRM…KKQARIRESL (64 aa)) constitute an S4 RNA-binding domain.

Belongs to the universal ribosomal protein uS4 family. Part of the 30S ribosomal subunit. Contacts protein S5. The interaction surface between S4 and S5 is involved in control of translational fidelity.

Functionally, one of the primary rRNA binding proteins, it binds directly to 16S rRNA where it nucleates assembly of the body of the 30S subunit. Its function is as follows. With S5 and S12 plays an important role in translational accuracy. This Bordetella avium (strain 197N) protein is Small ribosomal subunit protein uS4.